We begin with the raw amino-acid sequence, 47 residues long: Bacteriocin curvaticin DN317 (47 aa).

This sequence belongs to the bacteriocin class IIA/YGNGV family.

The protein localises to the secreted. Functionally, has bactericidal activity against various Gram-negative Campylobacter, and the Gram-positive L.monocytogenes and B.subtilis. In vitro, inhibits C.jejuni strain ATCC 33560 (MIC=27.3 ug/ml). The protein is Bacteriocin curvaticin DN317 of Latilactobacillus curvatus (Lactobacillus curvatus).